A 323-amino-acid polypeptide reads, in one-letter code: NADH-ubiquinone oxidoreductase chain 1 (323 aa).

8 consecutive transmembrane segments (helical) span residues 4–24, 73–93, 106–126, 150–170, 175–195, 226–246, 256–276, and 303–323; these read LFTV…VAFL, YLFF…WNLM, LLLV…SGWA, LALI…TYIM, FSWF…STLA, LFFI…VVIF, LFPL…FLFL, and IGAL…LPLF.

The protein belongs to the complex I subunit 1 family.

The protein localises to the mitochondrion inner membrane. It catalyses the reaction a ubiquinone + NADH + 5 H(+)(in) = a ubiquinol + NAD(+) + 4 H(+)(out). In terms of biological role, core subunit of the mitochondrial membrane respiratory chain NADH dehydrogenase (Complex I) that is believed to belong to the minimal assembly required for catalysis. Complex I functions in the transfer of electrons from NADH to the respiratory chain. The immediate electron acceptor for the enzyme is believed to be ubiquinone. The sequence is that of NADH-ubiquinone oxidoreductase chain 1 (ND1) from Paracentrotus lividus (Common sea urchin).